A 574-amino-acid polypeptide reads, in one-letter code: Proline--tRNA ligase (574 aa).

It belongs to the class-II aminoacyl-tRNA synthetase family. ProS type 1 subfamily. As to quaternary structure, homodimer.

Its subcellular location is the cytoplasm. It carries out the reaction tRNA(Pro) + L-proline + ATP = L-prolyl-tRNA(Pro) + AMP + diphosphate. Its function is as follows. Catalyzes the attachment of proline to tRNA(Pro) in a two-step reaction: proline is first activated by ATP to form Pro-AMP and then transferred to the acceptor end of tRNA(Pro). As ProRS can inadvertently accommodate and process non-cognate amino acids such as alanine and cysteine, to avoid such errors it has two additional distinct editing activities against alanine. One activity is designated as 'pretransfer' editing and involves the tRNA(Pro)-independent hydrolysis of activated Ala-AMP. The other activity is designated 'posttransfer' editing and involves deacylation of mischarged Ala-tRNA(Pro). The misacylated Cys-tRNA(Pro) is not edited by ProRS. This Ralstonia pickettii (strain 12J) protein is Proline--tRNA ligase.